The sequence spans 516 residues: uncharacterized protein (516 aa).

PFTB repeat units follow at residues 45–86 (RQDA…QRAD) and 401–443 (DERA…DGSE).

This is an uncharacterized protein from Bradyrhizobium diazoefficiens (strain JCM 10833 / BCRC 13528 / IAM 13628 / NBRC 14792 / USDA 110).